Here is a 2582-residue protein sequence, read N- to C-terminus: Chromodomain-helicase-DNA-binding protein 8 (2582 aa).

Disordered regions lie at residues 22 to 111 (DDSF…PVLQ), 136 to 155 (MGVS…PSQS), 253 to 283 (VKGS…TQGE), and 349 to 377 (QKIQ…PLTL). Polar residues-rich tracts occupy residues 42–51 (SLDSLDQMNQ), 94–111 (DYTT…PVLQ), and 141–155 (TGVS…PSQS). A compositionally biased stretch (low complexity) spans 255–267 (GSAPAGNPGAAGP). Over residues 355–372 (PQPPSSQPQPQPQPPPSA) the composition is skewed to pro residues. Ser434 carries the phosphoserine modification. 2 disordered regions span residues 475 to 585 (RARG…VKRK) and 598 to 617 (DEEE…PILP). Positions 495 to 518 (RPEEEGEKKRRKKSSGERLKEEKP) are enriched in basic and acidic residues. Phosphoserine occurs at positions 555 and 564. Over residues 574-585 (QKRRSNRQVKRK) the composition is skewed to basic residues. Lys611 is covalently cross-linked (Glycyl lysine isopeptide (Lys-Gly) (interchain with G-Cter in SUMO)). Chromo domains are found at residues 644 to 711 (AIVD…AQMR) and 726 to 792 (VEVD…RVNR). Residues 825 to 999 (LFNWYNRQNC…FSLLHFLEPS (175 aa)) enclose the Helicase ATP-binding domain. 838 to 845 (DEMGLGKT) is an ATP binding site. Residues 950–953 (DEAH) carry the DEAH box motif. The region spanning 1139–1290 (LIDKLLPKLK…KAVLQSMSGR (152 aa)) is the Helicase C-terminal domain. Ser1422 and Ser1426 each carry phosphoserine. The segment at 1694 to 1715 (EDPEYKPLQGPPKDPDDEGDPL) is disordered. Positions 1791-2304 (IARREKQQRW…LVELEVECME (514 aa)) are interaction with FAM124B. 2 positions are modified to phosphoserine: Ser1978 and Ser1980. Positions 1990–2019 (QCTSRTASPSPLRPDAPVEKSPEESTVQVP) are disordered. Thr1995 bears the Phosphothreonine mark. Ser1997, Ser1999, and Ser2010 each carry phosphoserine. A Glycyl lysine isopeptide (Lys-Gly) (interchain with G-Cter in SUMO2) cross-link involves residue Lys2027. Residues Ser2040, Ser2070, and Ser2072 each carry the phosphoserine modification. Residues 2045-2120 (VRVGSSDTAP…RSRPKLYDEE (76 aa)) form a disordered region. A compositionally biased stretch (acidic residues) spans 2065–2074 (EDEDDSDSEL). Residues 2077–2096 (SKLSPSSSSSSSSSSSSSST) are compositionally biased toward low complexity. A compositionally biased stretch (basic and acidic residues) spans 2104–2118 (EEKLTADRSRPKLYD). A phosphoserine mark is found at Ser2184, Ser2202, and Ser2204. The interval 2187–2233 (VTAGGILGPGNHLLDSPSLTPGEDGDSPVPTPRSGSAASMAEEEASA) is disordered. At Thr2206 the chain carries Phosphothreonine. Ser2213 bears the Phosphoserine mark. A Phosphothreonine modification is found at Thr2217. Positions 2222-2233 (SAASMAEEEASA) are enriched in low complexity. At Ser2225 the chain carries Phosphoserine. Lys2258 participates in a covalent cross-link: Glycyl lysine isopeptide (Lys-Gly) (interchain with G-Cter in SUMO2). Residues 2486-2582 (HVDSSTMLHH…NSDSSEDADD (97 aa)) are disordered. Basic residues predominate over residues 2493–2511 (LHHHHHHPHPHHHHHHHPG). Residues 2514–2529 (TTGYPSSPATTTSGTA) are compositionally biased toward low complexity. A Phosphoserine modification is found at Ser2520. Residues 2537–2551 (PEDDDEEEDEEDDDL) show a composition bias toward acidic residues.

It belongs to the SNF2/RAD54 helicase family. CHD8 subfamily. Interacts with CTNNB1 and PIAS3. Component of some MLL1/MLL complex, at least composed of the core components KMT2A/MLL1, ASH2L, HCFC1/HCF1, WDR5 and RBBP5, as well as the facultative components BACC1, CHD8, E2F6, HSP70, INO80C, KANSL1, LAS1L, MAX, MCRS1, MGA, KAT8/MOF, PELP1, PHF20, PRP31, RING2, RUVB1/TIP49A, RUVB2/TIP49B, SENP3, TAF1, TAF4, TAF6, TAF7, TAF9 and TEX10. Interacts with CHD7. Interacts with FAM124B. Interacts with p53/TP53 and histone H1. Interacts with CTCF. Interacts with TLK2. Interacts with HNRNPL in an RNA-dependent manner. Post-translationally, sumoylated.

Its subcellular location is the nucleus. The enzyme catalyses ATP + H2O = ADP + phosphate + H(+). ATP-dependent chromatin-remodeling factor, it slides nucleosomes along DNA; nucleosome sliding requires ATP. Acts as a transcription repressor by remodeling chromatin structure and recruiting histone H1 to target genes. Suppresses p53/TP53-mediated apoptosis by recruiting histone H1 and preventing p53/TP53 transactivation activity. Acts as a negative regulator of Wnt signaling pathway by regulating beta-catenin (CTNNB1) activity. Negatively regulates CTNNB1-targeted gene expression by being recruited specifically to the promoter regions of several CTNNB1 responsive genes. Involved in both enhancer blocking and epigenetic remodeling at chromatin boundary via its interaction with CTCF. Acts as a suppressor of STAT3 activity by suppressing the LIF-induced STAT3 transcriptional activity. Also acts as a transcription activator via its interaction with ZNF143 by participating in efficient U6 RNA polymerase III transcription. Regulates alternative splicing of a core group of genes involved in neuronal differentiation, cell cycle and DNA repair. Enables H3K36me3-coupled transcription elongation and co-transcriptional RNA processing likely via interaction with HNRNPL. In Mus musculus (Mouse), this protein is Chromodomain-helicase-DNA-binding protein 8.